Consider the following 335-residue polypeptide: Phosphatidate cytidylyltransferase, mitochondrial (335 aa).

It belongs to the TAM41 family. Requires Mg(2+) as cofactor.

It localises to the mitochondrion inner membrane. The catalysed reaction is a 1,2-diacyl-sn-glycero-3-phosphate + CTP + H(+) = a CDP-1,2-diacyl-sn-glycerol + diphosphate. Its pathway is phospholipid metabolism; CDP-diacylglycerol biosynthesis; CDP-diacylglycerol from sn-glycerol 3-phosphate: step 3/3. Its function is as follows. Catalyzes the conversion of phosphatidic acid (PA) to CDP-diacylglycerol (CDP-DAG), an essential intermediate in the synthesis of phosphatidylglycerol, cardiolipin and phosphatidylinositol. The chain is Phosphatidate cytidylyltransferase, mitochondrial (TAMM41) from Bos taurus (Bovine).